A 654-amino-acid chain; its full sequence is Pentatricopeptide repeat-containing protein At3g16610 (654 aa).

PPR repeat units follow at residues 1–32, 34–64, 67–101, 102–136, 137–171, 172–203, 204–238, 239–269, 270–304, 307–341, 342–372, 373–407, 408–442, 443–473, 474–508, 509–543, and 546–576; these read MFLS…SLTL, SSTV…IPHP, NPIA…GVRP, TKYT…DFAT, DMYV…DMVA, WNAM…GLSP, NLST…GFSN, DLVV…DFKK, NEVT…DNVA, TPVA…GFIL, DLTV…IGLK, DVIS…GIRP, DITT…GYAV, NTSI…MHKR, DIVS…GVNP, DEVT…DFNV, and RIDH…MPFE. Residues 581–654 form a type E motif; degenerate region; that stretch reads VLGTLLSACW…KTPGYSWVDV (74 aa).

This sequence belongs to the PPR family. PCMP-E subfamily.

In Arabidopsis thaliana (Mouse-ear cress), this protein is Pentatricopeptide repeat-containing protein At3g16610 (PCMP-E91).